The sequence spans 358 residues: Pre-mRNA-splicing factor spp2 (358 aa).

Disordered regions lie at residues 1–250 (MTDQ…RAVP) and 298–358 (AWNQ…RGDR). The segment covering 24–40 (KTKKPSRPTHTRRHHAR) has biased composition (basic residues). Basic and acidic residues-rich tracts occupy residues 80–137 (LENR…DASR) and 145–160 (RSRD…KDLQ). Polar residues predominate over residues 174-185 (NPKSTTTATSSF). 2 stretches are compositionally biased toward basic and acidic residues: residues 233 to 246 (SSHD…HSDY) and 309 to 358 (GDSR…RGDR).

It belongs to the SPP2 family. Associated with the spliceosome.

It localises to the nucleus. Its function is as follows. Involved in spliceosome maturation and the first step of pre-mRNA splicing. The protein is Pre-mRNA-splicing factor spp2 (msp-40) of Neurospora crassa (strain ATCC 24698 / 74-OR23-1A / CBS 708.71 / DSM 1257 / FGSC 987).